Here is a 179-residue protein sequence, read N- to C-terminus: MDVKVLRLGHRPSRDARITTHVCLTARAFGASEVILSGEEDPKLMEGVEDVVRRWGGPFSVVYRRNWQGVIDSWKKDGGEVIHLTMYGLPARDVVPGIMDNGKDKLIVVGGARVPGKVYSLADYNVGVTNQPHSEVSSLAVFMHMLLDGAEFDLKFEDARIEVIPQARGKMLREIDDGD.

L84 serves as a coordination point for S-adenosyl-L-methionine.

The protein belongs to the aTrm56 family. In terms of assembly, homodimer.

The protein resides in the cytoplasm. It catalyses the reaction cytidine(56) in tRNA + S-adenosyl-L-methionine = 2'-O-methylcytidine(56) in tRNA + S-adenosyl-L-homocysteine + H(+). Functionally, specifically catalyzes the AdoMet-dependent 2'-O-ribose methylation of cytidine at position 56 in tRNAs. The polypeptide is tRNA (cytidine(56)-2'-O)-methyltransferase (Methanothermobacter thermautotrophicus (strain ATCC 29096 / DSM 1053 / JCM 10044 / NBRC 100330 / Delta H) (Methanobacterium thermoautotrophicum)).